We begin with the raw amino-acid sequence, 407 residues long: Aurora kinase (407 aa).

2 disordered regions span residues 1–43 (MTPT…STSS) and 66–137 (ERQG…TQSK). Low complexity-rich tracts occupy residues 31–43 (SAST…STSS) and 126–136 (STTTTMTSTQS). One can recognise a Protein kinase domain in the interval 147-399 (FDIGRPLGKG…LEGVIAHAWI (253 aa)). ATP contacts are provided by residues Lys-157, Lys-176, and 224 to 227 (LEYA). The active-site Proton acceptor is Asp-272. Asp-290 contacts ATP.

The protein belongs to the protein kinase superfamily. Ser/Thr protein kinase family.

It is found in the cytoplasm. The protein resides in the cytoskeleton. The protein localises to the spindle. Its subcellular location is the midbody. It localises to the microtubule organizing center. It is found in the centrosome. The protein resides in the nucleus. The protein localises to the chromosome. Its subcellular location is the centromere. The catalysed reaction is L-seryl-[protein] + ATP = O-phospho-L-seryl-[protein] + ADP + H(+). The enzyme catalyses L-threonyl-[protein] + ATP = O-phospho-L-threonyl-[protein] + ADP + H(+). With respect to regulation, cdc2 activity is required for activation. In terms of biological role, serine/threonine protein kinase that contributes to the regulation of cell cycle progression. Involved in meiotic apparatus formation and polar body extrusion. Contributes to Plk1 activation and phosphorylation of histone H3 at 'Ser-10' during meiosis I. Required for accurate progression of early embryonic M phase. Involved in chromosome alignment and cleavage furrow formation during early embryonic cycles. May be involved in mitotic spindle formation and cytokinesis. This Patiria pectinifera (Starfish) protein is Aurora kinase.